Reading from the N-terminus, the 79-residue chain is Sulfur carrier protein TusA (79 aa).

Cysteine 16 (cysteine persulfide intermediate) is an active-site residue.

It belongs to the sulfur carrier protein TusA family.

The protein resides in the cytoplasm. Functionally, sulfur carrier protein which probably makes part of a sulfur-relay system. This chain is Sulfur carrier protein TusA, found in Pseudomonas paraeruginosa (strain DSM 24068 / PA7) (Pseudomonas aeruginosa (strain PA7)).